The primary structure comprises 542 residues: Delta 8-(E)-sphingolipid desaturase (542 aa).

Residues 1 to 75 enclose the Cytochrome b5 heme-binding domain; it reads MVVSREEVRE…FKRWSIGRVK (75 aa). His-35 and His-58 together coordinate heme. 2 consecutive transmembrane segments (helical) span residues 215–235 and 248–268; these read WYTLSAISIGLMWQQLVFIAH and IDNIIGIIIANFIGGLSLGWW. The Histidine box-1 motif lies at 235 to 239; sequence HDAGH. The short motif at 272 to 276 is the Histidine box-2 element; it reads HNVHH. 3 helical membrane passes run 329 to 346, 360 to 380, and 393 to 413; these read LYYPILSFGRFNLYRLSW, AAWFRYLELIGLCFFSYWFFY, and FWFLLISHWTTMIVHVQIVLS. The short motif at 455–459 is the Histidine box-3 element; that stretch reads QAIHH.

Belongs to the fatty acid desaturase type 1 family.

It localises to the membrane. The enzyme catalyses an N-acylsphing-4-enine + 2 Fe(II)-[cytochrome b5] + O2 + 2 H(+) = a (4E,8E)-4-sphinga-4,8-dienine ceramide + 2 Fe(III)-[cytochrome b5] + 2 H2O. Its pathway is lipid metabolism; sphingolipid metabolism. Delta(8)-fatty-acid desaturase which introduces a double bond at the 8-position in the long-chain base (LCB) of ceramides. Required for the formation of the di-unsaturated sphingoid base (E,E)-sphinga-4,8-dienine during glucosylceramide (GluCer) biosynthesis. The polypeptide is Delta 8-(E)-sphingolipid desaturase (Komagataella phaffii (strain GS115 / ATCC 20864) (Yeast)).